The chain runs to 103 residues: Large ribosomal subunit protein bL21 (103 aa).

This sequence belongs to the bacterial ribosomal protein bL21 family. In terms of assembly, part of the 50S ribosomal subunit. Contacts protein L20.

This protein binds to 23S rRNA in the presence of protein L20. The protein is Large ribosomal subunit protein bL21 of Desulforudis audaxviator (strain MP104C).